The primary structure comprises 826 residues: Sister chromatid cohesion protein PDS5 homolog D (826 aa).

5 HEAT repeats span residues 18–54, 55–94, 151–188, 189–226, and 230–267; these read GTNLLSPPSSTDDLLTLLDETESLLKNVEQDQPLSMQ, SALIPSRNALVSVDLLSHPDSDVRVSVVSCLTEIVRITAP, DLILQMFRNFFKFIRSDHPQLVFSSMELIMIAIIDETE, QVSTDLLDSLLATVKKENQNVSPMSWSLAEKVLSRCAR, and PYIIEALKSRGTSLDMYSPVVSSICQSVFNTPKVHSPV. Disordered regions lie at residues 261 to 551 and 640 to 826; these read PKVH…EVES and KKSK…KRKS. 2 stretches are compositionally biased toward basic and acidic residues: residues 269–286 and 296–309; these read TKEHEEKLDLGHSRKENL and RHETRGINEKEKVR. A Nuclear localization signal 1 motif is present at residues 281-288; the sequence is SRKENLSK. The segment covering 311–323 has biased composition (polar residues); the sequence is GNKSSLLKQSLKQ. The short motif at 357–364 is the Nuclear localization signal 2 element; it reads GKRDPLKT. The segment covering 396 to 408 has biased composition (polar residues); the sequence is SPATSSRSLTGSL. The HEAT 6 repeat unit spans residues 424 to 461; it reads SLSSPRLKKLASCFRDEEPNQEDDRKIGNSSKQTRSKN. The span at 437–450 shows a compositional bias: basic and acidic residues; it reads FRDEEPNQEDDRKI. Positions 451 to 460 are enriched in polar residues; it reads GNSSKQTRSK. Residues 644–663 show a composition bias toward low complexity; that stretch reads NVAVSVEPTSSSGVRSSSRT. Positions 665 to 701 are enriched in basic and acidic residues; that stretch reads MKKDCGKRLNKQVEKTREGKNLRSLKELNAETDRTAE. Residues 702-724 are compositionally biased toward acidic residues; it reads EQEVSLEAESDDRSEEQEYEDDC. Basic and acidic residues predominate over residues 725–746; it reads SDKKEQSQDKGVEAETKEEEKQ. 3 stretches are compositionally biased toward acidic residues: residues 752–763, 771–800, and 811–826; these read GESEGEDSESEE, DDMEDDEEEEEEEIDHMEDEAEEEKEEVDD, and EKEEEEEEEDEEKRKS. Residues 770–825 are a coiled coil; it reads TDDMEDDEEEEEEEIDHMEDEAEEEKEEVDDKEASANMSEIEKEEEEEEEDEEKRK.

This sequence belongs to the PDS5 family. Interacts with the cohesin complex.

It is found in the nucleus. In terms of biological role, cohesin cofactor dispensable during the meiotic division but playing an important role in DNA repair by homologous recombination (HR) probably by helping SMC5/SMC6 complex. Regulator of sister chromatid cohesion in mitosis which may stabilize cohesin complex association with chromatin. May couple sister chromatid cohesion during mitosis to DNA replication. Cohesion ensures that chromosome partitioning is accurate in both meiotic and mitotic cells and plays an important role in DNA repair. This is Sister chromatid cohesion protein PDS5 homolog D from Arabidopsis thaliana (Mouse-ear cress).